Reading from the N-terminus, the 400-residue chain is Tryptophan synthase beta chain (400 aa).

Lys-91 bears the N6-(pyridoxal phosphate)lysine mark.

This sequence belongs to the TrpB family. As to quaternary structure, tetramer of two alpha and two beta chains. Pyridoxal 5'-phosphate serves as cofactor.

It carries out the reaction (1S,2R)-1-C-(indol-3-yl)glycerol 3-phosphate + L-serine = D-glyceraldehyde 3-phosphate + L-tryptophan + H2O. It functions in the pathway amino-acid biosynthesis; L-tryptophan biosynthesis; L-tryptophan from chorismate: step 5/5. In terms of biological role, the beta subunit is responsible for the synthesis of L-tryptophan from indole and L-serine. In Listeria monocytogenes serotype 4b (strain CLIP80459), this protein is Tryptophan synthase beta chain.